The sequence spans 388 residues: uncharacterized protein (388 aa).

A run of 11 helical transmembrane segments spans residues 18–38 (AAMFLNYLTIGIPLVMLPLYV), 42–62 (LHLSDLLIGIAVGSQFIATLL), 89–111 (ASGLLMLVSLIAHPVPLLAWAIL), 116–136 (VLLGIGESFILTGNLTWGMWL), 145–165 (VISWNGMATYGALAIGAPLGL), 171–191 (AGLALPALLVVLLPIIASGVI), 219–239 (TGLVLQGIGFATLSAFTALWF), 248–268 (GFAMTLFGIAFIAVRFFCAKF), 287–307 (TGLAVMWAAPSAGAALIGAAI), 341–361 (AFQDLAYGFTGPIAGLLTPFI), and 365–385 (QVFLLAAACALLGAAVVHLLL).

Belongs to the major facilitator superfamily. YfcJ family.

It localises to the cell inner membrane. This is an uncharacterized protein from Salmonella typhimurium (strain LT2 / SGSC1412 / ATCC 700720).